Here is a 197-residue protein sequence, read N- to C-terminus: Probable molybdenum cofactor guanylyltransferase (197 aa).

GTP contacts are provided by residues 12-14 (LAG), Lys24, Asp71, and Asp103. Residue Asp103 coordinates Mg(2+).

Belongs to the MobA family. Requires Mg(2+) as cofactor.

Its subcellular location is the cytoplasm. It carries out the reaction Mo-molybdopterin + GTP + H(+) = Mo-molybdopterin guanine dinucleotide + diphosphate. In terms of biological role, transfers a GMP moiety from GTP to Mo-molybdopterin (Mo-MPT) cofactor (Moco or molybdenum cofactor) to form Mo-molybdopterin guanine dinucleotide (Mo-MGD) cofactor. The chain is Probable molybdenum cofactor guanylyltransferase from Mycolicibacterium paratuberculosis (strain ATCC BAA-968 / K-10) (Mycobacterium paratuberculosis).